We begin with the raw amino-acid sequence, 341 residues long: L-threonine 3-dehydrogenase (341 aa).

Cys-38 contributes to the Zn(2+) binding site. Residues Thr-40 and His-43 each act as charge relay system in the active site. Zn(2+)-binding residues include His-63, Glu-64, Cys-93, Cys-96, Cys-99, and Cys-107. Residues Ile-175, Asp-195, Arg-200, 262-264, and 286-287 contribute to the NAD(+) site; these read LGI and IY.

This sequence belongs to the zinc-containing alcohol dehydrogenase family. Homotetramer. Requires Zn(2+) as cofactor.

Its subcellular location is the cytoplasm. The catalysed reaction is L-threonine + NAD(+) = (2S)-2-amino-3-oxobutanoate + NADH + H(+). The protein operates within amino-acid degradation; L-threonine degradation via oxydo-reductase pathway; glycine from L-threonine: step 1/2. Its function is as follows. Catalyzes the NAD(+)-dependent oxidation of L-threonine to 2-amino-3-ketobutyrate. The polypeptide is L-threonine 3-dehydrogenase (Escherichia coli O157:H7).